The following is a 340-amino-acid chain: DNA-directed RNA polymerase subunit alpha (340 aa).

An alpha N-terminal domain (alpha-NTD) region spans residues 1–236 (MLSLSKNWNT…EQLQLFISFE (236 aa)). The tract at residues 246 to 340 (TDALPFSPYL…LSNRYEDSYN (95 aa)) is alpha C-terminal domain (alpha-CTD).

The protein belongs to the RNA polymerase alpha chain family. As to quaternary structure, homodimer. The RNAP catalytic core consists of 2 alpha, 1 beta, 1 beta' and 1 omega subunit. When a sigma factor is associated with the core the holoenzyme is formed, which can initiate transcription.

The enzyme catalyses RNA(n) + a ribonucleoside 5'-triphosphate = RNA(n+1) + diphosphate. In terms of biological role, DNA-dependent RNA polymerase catalyzes the transcription of DNA into RNA using the four ribonucleoside triphosphates as substrates. This chain is DNA-directed RNA polymerase subunit alpha, found in Rickettsia felis (strain ATCC VR-1525 / URRWXCal2) (Rickettsia azadi).